A 742-amino-acid polypeptide reads, in one-letter code: Feeding circuit activating peptides (742 aa).

The N-terminal stretch at 1 to 22 (MTFAASFRALLCVLFCAALVHC) is a signal peptide. Positions 23–98 (KTRTKRYVPH…YGALADRDVD (76 aa)) are excised as a propeptide. Positions 117–131 (GSLDAIPQDTDASSD) are cleaved as a propeptide — connecting peptide. 20 propeptides span residues 164–168 (GSGAE), 202–220 (RGTGGQMHASSPRVVPWGS), 236–253 (DTELVENRQTTGQQTEVN), 271–275 (SGEAG), 293–297 (ADDQG), 315–321 (FDNSAGE), 339–341 (AGD), 359–366 (FDNDISGQ), 384–388 (SDQDN), 406–410 (ADDDG), 428–432 (ADEDD), 450–454 (GDEDD), 472–476 (ADEDD), 494–498 (SDEDD), 516–520 (SDEDD), 538–542 (ADEDD), 560–564 (NSPGL), 582–592 (NNEYYSGAENE), 610–614 (DQPGE), and 647–742 (NSAD…AGQM).

As to expression, expressed in pleural, pedal, abdominal, buccal and cerebral ganglia.

It is found in the secreted. In terms of biological role, initiates organized rhythmic motor output of feeding circuit. The chain is Feeding circuit activating peptides from Aplysia californica (California sea hare).